The sequence spans 619 residues: Leucine aminopeptidase 2 (619 aa).

A peptide-binding positions include 141–143 and 273–278; these read QCQ and PYGGME. H302 contributes to the Zn(2+) binding site. E303 functions as the Proton acceptor in the catalytic mechanism. Residues H306 and E325 each contribute to the Zn(2+) site. Residue Y390 is the Proton donor of the active site.

This sequence belongs to the peptidase M1 family. Zn(2+) serves as cofactor.

It localises to the cytoplasm. It is found in the nucleus. The enzyme catalyses an epoxide + H2O = an ethanediol. Aminopeptidase that preferentially cleaves di- and tripeptides. Also has low epoxide hydrolase activity (in vitro). Can hydrolyze the epoxide leukotriene LTA(4) but it forms preferentially 5,6-dihydroxy-7,9,11,14-eicosatetraenoic acid rather than the cytokine leukotriene B(4) as the product compared to the homologous mammalian enzyme (in vitro). This is Leucine aminopeptidase 2 from Coccidioides immitis (strain RS) (Valley fever fungus).